Reading from the N-terminus, the 85-residue chain is Large ribosomal subunit protein bL27 (85 aa).

It belongs to the bacterial ribosomal protein bL27 family.

The polypeptide is Large ribosomal subunit protein bL27 (Campylobacter curvus (strain 525.92)).